The primary structure comprises 201 residues: Large ribosomal subunit protein uL4 (201 aa).

Residues 44–68 (KAQKTRSEVAGTTKKSKKQKGGGAR) form a disordered region.

The protein belongs to the universal ribosomal protein uL4 family. In terms of assembly, part of the 50S ribosomal subunit.

Its function is as follows. One of the primary rRNA binding proteins, this protein initially binds near the 5'-end of the 23S rRNA. It is important during the early stages of 50S assembly. It makes multiple contacts with different domains of the 23S rRNA in the assembled 50S subunit and ribosome. In terms of biological role, forms part of the polypeptide exit tunnel. The polypeptide is Large ribosomal subunit protein uL4 (Xanthomonas axonopodis pv. citri (strain 306)).